Here is a 282-residue protein sequence, read N- to C-terminus: Large ribosomal subunit protein uL2 (282 aa).

Disordered stretches follow at residues 31–54 (KRLT…TRHI) and 223–282 (LAMN…NTQR). Composition is skewed to basic residues over residues 34-54 (TKPV…TRHI) and 270-282 (VTRR…NTQR).

This sequence belongs to the universal ribosomal protein uL2 family. As to quaternary structure, part of the 50S ribosomal subunit. Forms a bridge to the 30S subunit in the 70S ribosome.

Functionally, one of the primary rRNA binding proteins. Required for association of the 30S and 50S subunits to form the 70S ribosome, for tRNA binding and peptide bond formation. It has been suggested to have peptidyltransferase activity; this is somewhat controversial. Makes several contacts with the 16S rRNA in the 70S ribosome. The polypeptide is Large ribosomal subunit protein uL2 (Anaeromyxobacter dehalogenans (strain 2CP-1 / ATCC BAA-258)).